We begin with the raw amino-acid sequence, 87 residues long: U3-theraphotoxin-Hhn1e (87 aa).

Residues 1–24 form the signal peptide; the sequence is MVNMKASMFLTFAGLVLLFVVCYA. Residues 25-52 constitute a propeptide that is removed on maturation; sequence SESEEKEFPKGMLSSIFAVDNDFKQEER. Cystine bridges form between cysteine 54–cysteine 67, cysteine 61–cysteine 72, and cysteine 66–cysteine 79.

The protein belongs to the neurotoxin 10 (Hwtx-1) family. 51 (Hntx-8) subfamily. Hntx-8 sub-subfamily. In terms of tissue distribution, expressed by the venom gland.

The protein resides in the secreted. Ion channel inhibitor. This chain is U3-theraphotoxin-Hhn1e, found in Cyriopagopus hainanus (Chinese bird spider).